The chain runs to 555 residues: Dihydroxy-acid dehydratase (555 aa).

Position 46 (C46) interacts with [2Fe-2S] cluster. D78 serves as a coordination point for Mg(2+). C119 lines the [2Fe-2S] cluster pocket. Mg(2+) is bound by residues D120 and K121. K121 is modified (N6-carboxylysine). Position 191 (C191) interacts with [2Fe-2S] cluster. E442 serves as a coordination point for Mg(2+). S468 acts as the Proton acceptor in catalysis.

It belongs to the IlvD/Edd family. Homodimer. [2Fe-2S] cluster serves as cofactor. Requires Mg(2+) as cofactor.

The catalysed reaction is (2R)-2,3-dihydroxy-3-methylbutanoate = 3-methyl-2-oxobutanoate + H2O. The enzyme catalyses (2R,3R)-2,3-dihydroxy-3-methylpentanoate = (S)-3-methyl-2-oxopentanoate + H2O. It participates in amino-acid biosynthesis; L-isoleucine biosynthesis; L-isoleucine from 2-oxobutanoate: step 3/4. It functions in the pathway amino-acid biosynthesis; L-valine biosynthesis; L-valine from pyruvate: step 3/4. Its function is as follows. Functions in the biosynthesis of branched-chain amino acids. Catalyzes the dehydration of (2R,3R)-2,3-dihydroxy-3-methylpentanoate (2,3-dihydroxy-3-methylvalerate) into 2-oxo-3-methylpentanoate (2-oxo-3-methylvalerate) and of (2R)-2,3-dihydroxy-3-methylbutanoate (2,3-dihydroxyisovalerate) into 2-oxo-3-methylbutanoate (2-oxoisovalerate), the penultimate precursor to L-isoleucine and L-valine, respectively. The protein is Dihydroxy-acid dehydratase of Thermus thermophilus (strain ATCC 27634 / DSM 579 / HB8).